The sequence spans 793 residues: MKNVQINIGAVVKEEDEWDQEMGPFPKPGVATLRDWDFKICNRYKIMYSPADDTCTLCTYGPCDLTGNKKGACGIDMAAACGKIVLVAVLMGTCAHTAHGRHLYHWCLDKFGDMPFDMGSEILVDAPLYRTILGKKPKSLKDFGEALEYCEEEIVQLLAACHTGQEGHYMDFESKSLHSGMIDSLGKEICDMLQTVAYDMPRGAADAPLVEIGMGTLDQNKGVLIAYGHNLAAGAEAMIYTEEHNLWDKVDIGGVCCTAIDLTRITETGRESKIPANLGPKAKVAGAMGWWRKMVRAGIMDTVIVDEQCVFCDVLEDCQQRHIPVIASNDKIMLGLPDRTNDSADAIVEDLVSFKMPGVAILDPVKAGEVAIRTAVAVKPKREQYKKESLFTEQQFKDTLATCTECNQCAFVCPPHIRISEMISEALKGNLEPFSSTYEVCVGCQRCEQTCPQEIPILKLYEYANREYIRNQKFKMRAGRGPVLDTEIRKVGAPLVLGQIPGVIALVGCSNYPNGTKECYDIAKEFVDRGYIVVATGCMAMDMSLYKDEDGKTIWEQYEGAFDGRNICNIGSCVANAHIHGAAIKVATIFAHRNERANYDDIADYIMSKVGACGVAWGAYSQKAASIATGVNRIGIPVVVQPSSVIYRRTFMGRTDKPEDWMVIDAKNGNMQQIEPAPEAMLYIAETKEEAMLEMAKLCFRPSDNTQGRGIKLTHYCDISMKYFGKLPDDWHLFVRDVKDLPLNYQTQMMKELEEKHGWKIDWKAKKFISGPLRPADVSFDPTNIPRKIRAKK.

Positions 55, 58, 63, and 73 each coordinate [4Fe-4S] cluster. CO is bound at residue H96. [Ni-4Fe-4S] cluster is bound by residues H229, C257, and C309. 2 consecutive 4Fe-4S ferredoxin-type domains span residues 393–422 (EQQF…ISEM) and 432–461 (EPFS…LKLY). Positions 403, 406, 409, 413, 441, 444, 447, and 451 each coordinate [4Fe-4S] cluster. C509, C538, and C573 together coordinate [Ni-4Fe-4S] cluster.

Belongs to the Ni-containing carbon monoxide dehydrogenase family. Heterotetramer of two alpha and two epsilon subunits. The ACDS complex is made up of alpha, epsilon, beta, gamma and delta subunits with a probable stoichiometry of (alpha(2)epsilon(2))(4)-beta(8)-(gamma(1)delta(1))(8). Requires [4Fe-4S] cluster as cofactor. The cofactor is [Ni-4Fe-4S] cluster.

The enzyme catalyses CO + 2 oxidized [2Fe-2S]-[ferredoxin] + H2O = 2 reduced [2Fe-2S]-[ferredoxin] + CO2 + 2 H(+). Part of the ACDS complex that catalyzes the reversible cleavage of acetyl-CoA, allowing autotrophic growth from CO(2). The alpha-epsilon subcomponent functions as a carbon monoxide dehydrogenase. The sequence is that of Acetyl-CoA decarbonylase/synthase complex subunit alpha from Methanothrix soehngenii (Methanosaeta concilii).